The sequence spans 381 residues: Sulfate adenylyltransferase (381 aa).

This sequence belongs to the sulfate adenylyltransferase family.

It catalyses the reaction sulfate + ATP + H(+) = adenosine 5'-phosphosulfate + diphosphate. It functions in the pathway sulfur metabolism; hydrogen sulfide biosynthesis; sulfite from sulfate: step 1/3. The chain is Sulfate adenylyltransferase from Chloroflexus aurantiacus (strain ATCC 29366 / DSM 635 / J-10-fl).